Here is a 510-residue protein sequence, read N- to C-terminus: 2,3-bisphosphoglycerate-independent phosphoglycerate mutase (510 aa).

Residues Asp10 and Ser60 each contribute to the Mn(2+) site. The active-site Phosphoserine intermediate is the Ser60. Residues His121, 150 to 151, Arg182, Arg188, 252 to 255, and Lys325 each bind substrate; these read RD and RPDR. 5 residues coordinate Mn(2+): Asp392, His396, Asp433, His434, and His451.

It belongs to the BPG-independent phosphoglycerate mutase family. It depends on Mn(2+) as a cofactor.

Its subcellular location is the plastid. It is found in the chloroplast. It carries out the reaction (2R)-2-phosphoglycerate = (2R)-3-phosphoglycerate. It functions in the pathway carbohydrate degradation; glycolysis; pyruvate from D-glyceraldehyde 3-phosphate: step 3/5. Its function is as follows. Catalyzes the interconversion of 2-phosphoglycerate and 3-phosphoglycerate. This is 2,3-bisphosphoglycerate-independent phosphoglycerate mutase from Gracilaria tenuistipitata var. liui (Red alga).